The primary structure comprises 1384 residues: DNA-directed RNA polymerase subunit beta (1384 aa).

It belongs to the RNA polymerase beta chain family. In terms of assembly, the RNAP catalytic core consists of 2 alpha, 1 beta, 1 beta' and 1 omega subunit. When a sigma factor is associated with the core the holoenzyme is formed, which can initiate transcription.

It catalyses the reaction RNA(n) + a ribonucleoside 5'-triphosphate = RNA(n+1) + diphosphate. DNA-dependent RNA polymerase catalyzes the transcription of DNA into RNA using the four ribonucleoside triphosphates as substrates. This chain is DNA-directed RNA polymerase subunit beta, found in Stenotrophomonas maltophilia (strain R551-3).